Here is a 285-residue protein sequence, read N- to C-terminus: Acetyl-coenzyme A carboxylase carboxyl transferase subunit beta 2 (285 aa).

Residues M1–K20 form a disordered region. Residues L26–V285 enclose the CoA carboxyltransferase N-terminal domain. Zn(2+) is bound by residues C30, C33, C49, and C52. The C4-type zinc-finger motif lies at C30 to C52.

Belongs to the AccD/PCCB family. As to quaternary structure, acetyl-CoA carboxylase is a heterohexamer composed of biotin carboxyl carrier protein (AccB), biotin carboxylase (AccC) and two subunits each of ACCase subunit alpha (AccA) and ACCase subunit beta (AccD). Zn(2+) is required as a cofactor.

The protein localises to the cytoplasm. It carries out the reaction N(6)-carboxybiotinyl-L-lysyl-[protein] + acetyl-CoA = N(6)-biotinyl-L-lysyl-[protein] + malonyl-CoA. It participates in lipid metabolism; malonyl-CoA biosynthesis; malonyl-CoA from acetyl-CoA: step 1/1. In terms of biological role, component of the acetyl coenzyme A carboxylase (ACC) complex. Biotin carboxylase (BC) catalyzes the carboxylation of biotin on its carrier protein (BCCP) and then the CO(2) group is transferred by the transcarboxylase to acetyl-CoA to form malonyl-CoA. The protein is Acetyl-coenzyme A carboxylase carboxyl transferase subunit beta 2 of Lysinibacillus sphaericus (strain C3-41).